The sequence spans 472 residues: Protein c-ets-2-B (472 aa).

Residues 85-170 (DTFNGFAKER…EHLEEMMKEY (86 aa)) form the PNT domain. A DNA-binding region (ETS) is located at residues 366 to 446 (IQLWQFLLEL…SGKRYVYRFV (81 aa)).

The protein belongs to the ETS family.

It is found in the nucleus. Functionally, probable transcription factor. The sequence is that of Protein c-ets-2-B (ets2-b) from Xenopus laevis (African clawed frog).